A 114-amino-acid chain; its full sequence is Cuticle protein CP1158 (114 aa).

Pyrrolidone carboxylic acid is present on Q1. Repeat copies occupy residues Q1–F17, V26–L43, S70–S87, and V95–L112.

Calcified shell.

This is Cuticle protein CP1158 from Cancer pagurus (Rock crab).